The following is a 221-amino-acid chain: Probable glutathione S-transferase parC (221 aa).

The 80-residue stretch at 4–83 (EEVILLDFWP…YIEEVWKDKA (80 aa)) folds into the GST N-terminal domain. Residues Ser-14, Lys-41, Ile-55, and 67–68 (ES) each bind glutathione. Positions 90–214 (DPYDRAQARF…PKVLEFVKVL (125 aa)) constitute a GST C-terminal domain.

It belongs to the GST superfamily. Phi family. In terms of tissue distribution, abundant in seedlings and roots. It is also found in the shoot tips, flowers and leaves.

The catalysed reaction is RX + glutathione = an S-substituted glutathione + a halide anion + H(+). Functionally, conjugation of reduced glutathione to a wide number of exogenous and endogenous hydrophobic electrophiles. The polypeptide is Probable glutathione S-transferase parC (PARC) (Nicotiana tabacum (Common tobacco)).